Consider the following 347-residue polypeptide: MTFMQQLQEAGERFRCINGLLWVVFGLGVLKCTTLSLRFLALIFDLFLLPAVNFDKYGAKTGKYCAITGASDGIGKEFARQMAKRGFNLVLISRTQSKLEALQKELEDQHHVVVKILAIDIAEDKESNYESIKELCAQLPITVLVNNVGQSHSIPVPFLETEEKELRNIITINNTATLLITQIIAPKIVETVKAENKKSGTRGLILTMGSFGGLIPTPLLATYSGSKSFLQGWSNSLAGELSKDAIDVELIISYLVTSSMSKIRRSSLMIPNPQQFVKSTLRSVGRRCGSQERYATMTPYWAHAVYQFVITETFGVYSKIVNSINYSFHKSIRIRALKKAARQVKKE.

Residues 20 to 40 (LLWVVFGLGVLKCTTLSLRFL) form a helical membrane-spanning segment. Positions 120, 147, 223, 227, 256, and 258 each coordinate NADP(+). The Proton donor role is filled by tyrosine 223. Lysine 227 (lowers pKa of active site Tyr) is an active-site residue.

This sequence belongs to the short-chain dehydrogenases/reductases (SDR) family. As to quaternary structure, interacts with the fatty acid elongation system components ELO3 and TSC13.

The protein localises to the endoplasmic reticulum membrane. It carries out the reaction a very-long-chain (3R)-3-hydroxyacyl-CoA + NADP(+) = a very-long-chain 3-oxoacyl-CoA + NADPH + H(+). It catalyses the reaction 3-oxooctadecanoyl-CoA + NADPH + H(+) = (3R)-hydroxyoctadecanoyl-CoA + NADP(+). The catalysed reaction is 3-oxoeicosanoyl-CoA + NADPH + H(+) = (3R)-hydroxyeicosanoyl-CoA + NADP(+). The enzyme catalyses 3-oxodocosanoyl-CoA + NADPH + H(+) = (3R)-hydroxydocosanoyl-CoA + NADP(+). It carries out the reaction 3-oxotetracosanoyl-CoA + NADPH + H(+) = (3R)-hydroxytetracosanoyl-CoA + NADP(+). It catalyses the reaction 3-oxohexacosanoyl-CoA + NADPH + H(+) = (3R)-hydroxyhexacosanoyl-CoA + NADP(+). The protein operates within lipid metabolism; fatty acid biosynthesis. Functionally, component of the microsomal membrane bound fatty acid elongation system, which produces the 26-carbon very long-chain fatty acids (VLCFA) from palmitate. Catalyzes the reduction of the 3-ketoacyl-CoA intermediate that is formed in each cycle of fatty acid elongation. VLCFAs serve as precursors for ceramide and sphingolipids. In Saccharomyces cerevisiae (strain ATCC 204508 / S288c) (Baker's yeast), this protein is Very-long-chain 3-oxoacyl-CoA reductase (IFA38).